The following is a 637-amino-acid chain: Chaperone protein HtpG (637 aa).

Residues 1–338 (MTSTIDKNGA…SADLPLNISR (338 aa)) are a; substrate-binding. The interval 339–552 (EMIQESPILA…ESGPDRQLEK (214 aa)) is b. The interval 553–637 (ILLGVGQLAG…LRRSSAGGGD (85 aa)) is c.

It belongs to the heat shock protein 90 family. As to quaternary structure, homodimer.

The protein localises to the cytoplasm. Functionally, molecular chaperone. Has ATPase activity. This is Chaperone protein HtpG from Nitrobacter winogradskyi (strain ATCC 25391 / DSM 10237 / CIP 104748 / NCIMB 11846 / Nb-255).